We begin with the raw amino-acid sequence, 227 residues long: Ion-translocating oxidoreductase complex subunit E (227 aa).

A run of 5 helical transmembrane segments spans residues 57 to 77, 89 to 109, 111 to 131, 146 to 166, and 200 to 220; these read LGLG…ISLF, IYVM…NAFA, PVYQ…IVIG, AFDG…LGAI, and GLLL…ILAV.

It belongs to the NqrDE/RnfAE family. In terms of assembly, the complex is composed of six subunits: RnfA, RnfB, RnfC, RnfD, RnfE and RnfG.

Its subcellular location is the cell inner membrane. Its function is as follows. Part of a membrane-bound complex that couples electron transfer with translocation of ions across the membrane. In Haemophilus ducreyi (strain 35000HP / ATCC 700724), this protein is Ion-translocating oxidoreductase complex subunit E.